Here is a 170-residue protein sequence, read N- to C-terminus: Protein-export protein SecB (170 aa).

It belongs to the SecB family. As to quaternary structure, homotetramer, a dimer of dimers. One homotetramer interacts with 1 SecA dimer.

The protein localises to the cytoplasm. Functionally, one of the proteins required for the normal export of preproteins out of the cell cytoplasm. It is a molecular chaperone that binds to a subset of precursor proteins, maintaining them in a translocation-competent state. It also specifically binds to its receptor SecA. The protein is Protein-export protein SecB of Xanthomonas campestris pv. campestris (strain 8004).